The primary structure comprises 156 residues: Putative pre-16S rRNA nuclease (156 aa).

Belongs to the YqgF nuclease family.

Its subcellular location is the cytoplasm. Its function is as follows. Could be a nuclease involved in processing of the 5'-end of pre-16S rRNA. In Gloeobacter violaceus (strain ATCC 29082 / PCC 7421), this protein is Putative pre-16S rRNA nuclease.